The chain runs to 202 residues: LexA repressor (202 aa).

The H-T-H motif DNA-binding region spans 28–48 (RAEIAQQLGFRSPNAAEEHLK). Active-site for autocatalytic cleavage activity residues include S119 and K156.

This sequence belongs to the peptidase S24 family. In terms of assembly, homodimer.

The catalysed reaction is Hydrolysis of Ala-|-Gly bond in repressor LexA.. Its function is as follows. Represses a number of genes involved in the response to DNA damage (SOS response), including recA and lexA. In the presence of single-stranded DNA, RecA interacts with LexA causing an autocatalytic cleavage which disrupts the DNA-binding part of LexA, leading to derepression of the SOS regulon and eventually DNA repair. This is LexA repressor from Pectobacterium atrosepticum (strain SCRI 1043 / ATCC BAA-672) (Erwinia carotovora subsp. atroseptica).